The sequence spans 148 residues: Cytochrome c oxidase subunit 6, mitochondrial (148 aa).

The N-terminal 40 residues, 1–40 (MLSRAIFRNPVINRTLLRARPGAYHATRLTKNTFIQSRKY), are a transit peptide targeting the mitochondrion.

This sequence belongs to the cytochrome c oxidase subunit 5A family. In terms of assembly, component of the cytochrome c oxidase (complex IV, CIV), a multisubunit enzyme composed of 12 subunits. The complex is composed of a catalytic core of 3 subunits COX1, COX2 and COX3, encoded in the mitochondrial DNA, and 9 supernumerary subunits COX4, COX5A (or COX5B), COX6, COX7, COX8, COX9, COX12, COX13 and COX26, which are encoded in the nuclear genome. The complex exists as a monomer or a dimer and forms supercomplexes (SCs) in the inner mitochondrial membrane with a dimer of ubiquinol-cytochrome c oxidoreductase (cytochrome b-c1 complex, complex III, CIII), resulting in 2 different assemblies (supercomplexes III(2)IV and III(2)IV(2)). COX26 interacts with COX1, COX2, COX6 and COX9.

It localises to the mitochondrion inner membrane. It functions in the pathway energy metabolism; oxidative phosphorylation. Its function is as follows. Component of the cytochrome c oxidase, the last enzyme in the mitochondrial electron transport chain which drives oxidative phosphorylation. The respiratory chain contains 3 multisubunit complexes succinate dehydrogenase (complex II, CII), ubiquinol-cytochrome c oxidoreductase (cytochrome b-c1 complex, complex III, CIII) and cytochrome c oxidase (complex IV, CIV), that cooperate to transfer electrons derived from NADH and succinate to molecular oxygen, creating an electrochemical gradient over the inner membrane that drives transmembrane transport and the ATP synthase. Cytochrome c oxidase is the component of the respiratory chain that catalyzes the reduction of oxygen to water. Electrons originating from reduced cytochrome c in the intermembrane space (IMS) are transferred via the dinuclear copper A center (CU(A)) of COX2 and heme A of COX1 to the active site in COX1, a binuclear center (BNC) formed by heme A3 and copper B (CU(B)). The BNC reduces molecular oxygen to 2 water molecules using 4 electrons from cytochrome c in the IMS and 4 protons from the mitochondrial matrix. COX6 may stabilize the region of CIV at the interface with CIII, supporting a role in formation or stability of the CIII(2)IV(2) SC. The sequence is that of Cytochrome c oxidase subunit 6, mitochondrial (COX6) from Saccharomyces cerevisiae (strain ATCC 204508 / S288c) (Baker's yeast).